The sequence spans 541 residues: Light-independent protochlorophyllide reductase subunit B (541 aa).

Asp36 contributes to the [4Fe-4S] cluster binding site. Asp286 functions as the Proton donor in the catalytic mechanism. 421–422 (GM) is a binding site for substrate.

Belongs to the ChlB/BchB/BchZ family. Protochlorophyllide reductase is composed of three subunits; BchL, BchN and BchB. Forms a heterotetramer of two BchB and two BchN subunits. The cofactor is [4Fe-4S] cluster.

The enzyme catalyses chlorophyllide a + oxidized 2[4Fe-4S]-[ferredoxin] + 2 ADP + 2 phosphate = protochlorophyllide a + reduced 2[4Fe-4S]-[ferredoxin] + 2 ATP + 2 H2O. It functions in the pathway porphyrin-containing compound metabolism; bacteriochlorophyll biosynthesis (light-independent). Component of the dark-operative protochlorophyllide reductase (DPOR) that uses Mg-ATP and reduced ferredoxin to reduce ring D of protochlorophyllide (Pchlide) to form chlorophyllide a (Chlide). This reaction is light-independent. The NB-protein (BchN-BchB) is the catalytic component of the complex. The polypeptide is Light-independent protochlorophyllide reductase subunit B (Chloroflexus aurantiacus (strain ATCC 29364 / DSM 637 / Y-400-fl)).